The sequence spans 473 residues: Cysteine--tRNA ligase (473 aa).

Cys-29 contacts Zn(2+). Positions 31–41 (ATVQSAPHIGH) match the 'HIGH' region motif. Cys-207, His-232, and Glu-236 together coordinate Zn(2+). The short motif at 263–267 (KMSKS) is the 'KMSKS' region element. Lys-266 provides a ligand contact to ATP.

This sequence belongs to the class-I aminoacyl-tRNA synthetase family. In terms of assembly, monomer. Requires Zn(2+) as cofactor.

It is found in the cytoplasm. The catalysed reaction is tRNA(Cys) + L-cysteine + ATP = L-cysteinyl-tRNA(Cys) + AMP + diphosphate. This chain is Cysteine--tRNA ligase, found in Corynebacterium kroppenstedtii (strain DSM 44385 / JCM 11950 / CIP 105744 / CCUG 35717).